A 229-amino-acid chain; its full sequence is Dolichyldiphosphatase 1 (229 aa).

Helical transmembrane passes span L27–I47, M94–L114, F120–V140, and F156–I176.

Belongs to the dolichyldiphosphatase family.

The protein localises to the endoplasmic reticulum membrane. The enzyme catalyses a di-trans,poly-cis-dolichyl diphosphate + H2O = a di-trans,poly-cis-dolichyl phosphate + phosphate + H(+). The protein operates within protein modification; protein glycosylation. Functionally, required for efficient N-glycosylation. Necessary for maintaining optimal levels of dolichol-linked oligosaccharides. Hydrolyzes dolichyl pyrophosphate at a very high rate and dolichyl monophosphate at a much lower rate. Does not act on phosphatidate. The polypeptide is Dolichyldiphosphatase 1 (dolpp1) (Dictyostelium discoideum (Social amoeba)).